A 272-amino-acid chain; its full sequence is MRYAVLVTGPAGAGKSTFCASLITHAQTIGRSVHLVNLDPAADKFEYEPTIDIRDLINLEDVMEELEFGPNGGLIYCFEYLLNNLDWLEDELGAYEDDYLIIDCPGQIELYTHVPLLPRLATFLSTSLNFRTSAVYLIDSQFMQDKSKFFAGVMSAMSCMLSLGISMLCLMSKMDLVKDKKGRTKREVGRYLDPDPNLLLEDINQGTNSKFNQLNRAVVSLIEDQNIVSFLPLDVTSEDSVNTVLSHIDNMMQYGEDEEPKVPKDMDDGDFD.

Position 12 to 17 (12 to 17 (GAGKST)) interacts with GTP. A Gly-Pro-Asn (GPN)-loop; involved in dimer interface motif is present at residues 69–71 (GPN). 172-175 (SKMD) is a GTP binding site. Residues 253-272 (QYGEDEEPKVPKDMDDGDFD) form a disordered region.

The protein belongs to the GPN-loop GTPase family. Heterodimers with GPN1 or GPN2. Binds to RNA polymerase II (RNAPII).

Small GTPase required for proper nuclear import of RNA polymerase II and III (RNAPII and RNAPIII). May act at an RNAP assembly step prior to nuclear import. The polypeptide is GPN-loop GTPase 3 (Cryptococcus neoformans var. neoformans serotype D (strain JEC21 / ATCC MYA-565) (Filobasidiella neoformans)).